The chain runs to 595 residues: Elongation factor 4 (595 aa).

Residues 2 to 184 (SHIRNFSIIA…RLVATIPAPT (183 aa)) form the tr-type G domain. GTP is bound by residues 14-19 (DHGKST) and 131-134 (NKMD).

It belongs to the TRAFAC class translation factor GTPase superfamily. Classic translation factor GTPase family. LepA subfamily.

Its subcellular location is the cell inner membrane. It catalyses the reaction GTP + H2O = GDP + phosphate + H(+). Required for accurate and efficient protein synthesis under certain stress conditions. May act as a fidelity factor of the translation reaction, by catalyzing a one-codon backward translocation of tRNAs on improperly translocated ribosomes. Back-translocation proceeds from a post-translocation (POST) complex to a pre-translocation (PRE) complex, thus giving elongation factor G a second chance to translocate the tRNAs correctly. Binds to ribosomes in a GTP-dependent manner. This Pseudomonas savastanoi pv. phaseolicola (strain 1448A / Race 6) (Pseudomonas syringae pv. phaseolicola (strain 1448A / Race 6)) protein is Elongation factor 4.